The primary structure comprises 311 residues: Methionyl-tRNA formyltransferase (311 aa).

Position 112–115 (112–115) interacts with (6S)-5,6,7,8-tetrahydrofolate; that stretch reads SLLP.

This sequence belongs to the Fmt family.

The enzyme catalyses L-methionyl-tRNA(fMet) + (6R)-10-formyltetrahydrofolate = N-formyl-L-methionyl-tRNA(fMet) + (6S)-5,6,7,8-tetrahydrofolate + H(+). Attaches a formyl group to the free amino group of methionyl-tRNA(fMet). The formyl group appears to play a dual role in the initiator identity of N-formylmethionyl-tRNA by promoting its recognition by IF2 and preventing the misappropriation of this tRNA by the elongation apparatus. The protein is Methionyl-tRNA formyltransferase of Bradyrhizobium diazoefficiens (strain JCM 10833 / BCRC 13528 / IAM 13628 / NBRC 14792 / USDA 110).